Consider the following 179-residue polypeptide: Cytochrome b6-f complex iron-sulfur subunit (179 aa).

Residues 21 to 43 form a helical membrane-spanning segment; the sequence is LLTFGTVTGVALGALYPVVNYFI. The Rieske domain occupies 61–162; sequence GNDVSVTKFL…TNVSDDKIVL (102 aa). The [2Fe-2S] cluster site is built by C108, H110, C126, and H129. Cysteines 113 and 128 form a disulfide.

Belongs to the Rieske iron-sulfur protein family. The 4 large subunits of the cytochrome b6-f complex are cytochrome b6, subunit IV (17 kDa polypeptide, PetD), cytochrome f and the Rieske protein, while the 4 small subunits are PetG, PetL, PetM and PetN. The complex functions as a dimer. The cofactor is [2Fe-2S] cluster.

It localises to the cellular thylakoid membrane. It catalyses the reaction 2 oxidized [plastocyanin] + a plastoquinol + 2 H(+)(in) = 2 reduced [plastocyanin] + a plastoquinone + 4 H(+)(out). Its function is as follows. Component of the cytochrome b6-f complex, which mediates electron transfer between photosystem II (PSII) and photosystem I (PSI), cyclic electron flow around PSI, and state transitions. The protein is Cytochrome b6-f complex iron-sulfur subunit of Nostoc punctiforme (strain ATCC 29133 / PCC 73102).